A 257-amino-acid chain; its full sequence is Chymotrypsin-like elastase family member 3B (257 aa).

A signal peptide (or 3) is located at residues 1–2; sequence VA. A propeptide spans 3 to 15 (activation peptide); it reads SGYGPPSSHPSSR. Positions 16-255 constitute a Peptidase S1 domain; it reads VVNGEDAVPY…FIDWIEETIA (240 aa). Asn-38 carries N-linked (GlcNAc...) asparagine glycosylation. 2 disulfide bridges follow: Cys-45–Cys-61 and Cys-104–Cys-107. His-60 functions as the Charge relay system in the catalytic mechanism. Asp-110 functions as the Charge relay system in the catalytic mechanism. Intrachain disulfides connect Cys-144–Cys-210, Cys-175–Cys-191, and Cys-200–Cys-231. Catalysis depends on Ser-204, which acts as the Charge relay system.

The protein belongs to the peptidase S1 family. Elastase subfamily.

It carries out the reaction Preferential cleavage: Ala-|-Xaa. Does not hydrolyze elastin.. Efficient protease with alanine specificity but only little elastolytic activity. This Macaca mulatta (Rhesus macaque) protein is Chymotrypsin-like elastase family member 3B (CELA3B).